The primary structure comprises 271 residues: Imidazole glycerol phosphate synthase subunit HisF (271 aa).

Active-site residues include Asp12 and Asp131.

This sequence belongs to the HisA/HisF family. As to quaternary structure, heterodimer of HisH and HisF.

Its subcellular location is the cytoplasm. The catalysed reaction is 5-[(5-phospho-1-deoxy-D-ribulos-1-ylimino)methylamino]-1-(5-phospho-beta-D-ribosyl)imidazole-4-carboxamide + L-glutamine = D-erythro-1-(imidazol-4-yl)glycerol 3-phosphate + 5-amino-1-(5-phospho-beta-D-ribosyl)imidazole-4-carboxamide + L-glutamate + H(+). The protein operates within amino-acid biosynthesis; L-histidine biosynthesis; L-histidine from 5-phospho-alpha-D-ribose 1-diphosphate: step 5/9. Its function is as follows. IGPS catalyzes the conversion of PRFAR and glutamine to IGP, AICAR and glutamate. The HisF subunit catalyzes the cyclization activity that produces IGP and AICAR from PRFAR using the ammonia provided by the HisH subunit. The polypeptide is Imidazole glycerol phosphate synthase subunit HisF (Methanospirillum hungatei JF-1 (strain ATCC 27890 / DSM 864 / NBRC 100397 / JF-1)).